The sequence spans 174 residues: Calcineurin subunit B (174 aa).

EF-hand domains are found at residues 21-56 (EEIERIRKRFIKIDANQSGSIDRNEFLSIPSVASNP), 60-88 (RLFSVVDEDGGGDVDFQEFINSLSVFSVH), 90-125 (NKEEKLKFAFKIYDIDRDGYISNGELYLVLKMMVGT), and 131-166 (QLQQIVDKTIMEVDKDRDGKISFEEFKDIVSGSNVT). Ca(2+)-binding residues include aspartate 34, asparagine 36, serine 38, serine 40, glutamate 45, aspartate 66, aspartate 68, aspartate 72, glutamate 77, aspartate 103, aspartate 105, aspartate 107, tyrosine 109, glutamate 114, aspartate 144, aspartate 146, aspartate 148, lysine 150, and glutamate 155.

It belongs to the calcineurin regulatory subunit family. Composed of a catalytic subunit (A) and a regulatory subunit (B).

Its function is as follows. Regulatory subunit of calcineurin, a calcium-dependent, calmodulin stimulated protein phosphatase. Confers calcium sensitivity. The sequence is that of Calcineurin subunit B (cnb1) from Schizosaccharomyces pombe (strain 972 / ATCC 24843) (Fission yeast).